The chain runs to 327 residues: Phenylalanine--tRNA ligase alpha subunit (327 aa).

Residue glutamate 252 coordinates Mg(2+).

The protein belongs to the class-II aminoacyl-tRNA synthetase family. Phe-tRNA synthetase alpha subunit type 1 subfamily. As to quaternary structure, tetramer of two alpha and two beta subunits. Mg(2+) is required as a cofactor.

It localises to the cytoplasm. The catalysed reaction is tRNA(Phe) + L-phenylalanine + ATP = L-phenylalanyl-tRNA(Phe) + AMP + diphosphate + H(+). The polypeptide is Phenylalanine--tRNA ligase alpha subunit (Yersinia pestis bv. Antiqua (strain Angola)).